The following is a 402-amino-acid chain: MAQDRKKVLVLGAGYAGLQTVTKLQKAISTEEAEITLINKNEYHYEATWLHEASAGTLNYEDVLYPVESVLKKDKVNFVQAEVTKIDRDAKKVETNQGIYDFDILVVALGFVSETFGIEGMKDHAFQIENVITARELSRHIEDKFANYAASKEKDDNDLSILVGGAGFTGVEFLGELTDRIPELCSKYGVDQNKVKITCVEAAPKMLPMFSEELVNHAVSYLEDRGVEFKIATPIVACNEKGFVVEVDGEKQQLNAGTSVWAAGVRGSKLMEESFEGVKRGRIVTKQDLTINGYDNIFVIGDCSAFIPAGEERPLPTTAQIAMQQGESVAKNIKRILNGESTEEFEYVDRGTVCSLGSHDGVGMVFDKPIAGKKAAFMKKVIDTRAVFKIGGIGLAFKKGKF.

Residues 12–16, 39–40, and Val-83 contribute to the FAD site; these read GAGYA and NK. Glu-172 is an active-site residue. FAD contacts are provided by residues Asp-302, 319 to 320, and Lys-379; that span reads AQ.

The protein belongs to the NADH dehydrogenase family. The cofactor is FAD.

It localises to the cell membrane. The catalysed reaction is a quinone + NADH + H(+) = a quinol + NAD(+). In terms of biological role, alternative, nonproton pumping NADH:quinone oxidoreductase that delivers electrons to the respiratory chain by oxidation of NADH and reduction of quinones, and contributes to the regeneration of NAD(+). The chain is Type II NADH:quinone oxidoreductase from Staphylococcus aureus (strain MSSA476).